The chain runs to 377 residues: Carboxynorspermidine/carboxyspermidine decarboxylase (377 aa).

Position 41 is an N6-(pyridoxal phosphate)lysine (K41). E238 and D274 together coordinate substrate.

This sequence belongs to the Orn/Lys/Arg decarboxylase class-II family. NspC subfamily. Homodimer. Pyridoxal 5'-phosphate serves as cofactor.

It localises to the cytoplasm. The catalysed reaction is carboxynorspermidine + H(+) = norspermidine + CO2. It carries out the reaction carboxyspermidine + H(+) = spermidine + CO2. Its function is as follows. Catalyzes the decarboxylation of carboxynorspermidine and carboxyspermidine. Carboxynorspermidine is decarboxylated 20-fold more efficiently than carboxyspermidine. Exhibits some activity with L-ornithine, but shows no activity with L-arginine, L-lysine or meso-diaminopimelate. In Vibrio vulnificus (strain CMCP6), this protein is Carboxynorspermidine/carboxyspermidine decarboxylase.